We begin with the raw amino-acid sequence, 476 residues long: MNAAVRPVSADTAIADISLAAWGRKEILIAETEMPGLMATREEFAAAQPLKGARIAGSLHMTIQTAVLIETLKALGAEVRWASCNIFSTQDHAAAAIAETGTPVFAIKGESLADYWDYTHRIFEFGAAGTEGEGPNMILDDGGDATMLLHLGMRAEKDLSVLDNPASEEEKIAFAAIRAKLAQDPTWYTRKSAHIIGVTEETTTGVHRLNEMSAKGTLKFRAINVNDSVTKSKFDNLYGCRESLVDGIKRATDVMIAGKVAVVAGYGDVGKGCAQALRALSAQVWVTEIDPINALQAAMEGYKVVTMEWAADKADIFVTTTGNRDIIRHEHMVAMKNEAIVCNIGHFDNEIDVASIEQYQWEEIKPQVDHITFPDGKKIILLAKGRLVNLGCATGHPSFVMSASFANQTIAQIELFTKPDAYEVGKVYVLPKILDEKVARLHLKKVGAMLTELTDGQAAYIGVSKQGPYKPETYRY.

Thr62, Asp141, and Glu201 together coordinate substrate. NAD(+) is bound at residue 202–204 (TTT). The substrate site is built by Lys231 and Asp235. NAD(+)-binding positions include Asn236, 265–270 (GYGDVG), Glu288, Asn323, 344–346 (IGH), and Asn389.

This sequence belongs to the adenosylhomocysteinase family. Requires NAD(+) as cofactor.

Its subcellular location is the cytoplasm. It carries out the reaction S-adenosyl-L-homocysteine + H2O = L-homocysteine + adenosine. The protein operates within amino-acid biosynthesis; L-homocysteine biosynthesis; L-homocysteine from S-adenosyl-L-homocysteine: step 1/1. Functionally, may play a key role in the regulation of the intracellular concentration of adenosylhomocysteine. This Delftia acidovorans (strain DSM 14801 / SPH-1) protein is Adenosylhomocysteinase.